Reading from the N-terminus, the 516-residue chain is Glycosyltransferase-like protein gnt15 (516 aa).

Topologically, residues 1-24 (MSNFYNNNPRRNTFRLTERIKKKP) are cytoplasmic. A helical; Signal-anchor for type II membrane protein membrane pass occupies residues 25-45 (YQTLIVFILIFLFLYVFGPFG). Residues 46 to 516 (EKKSNNNNNN…NDNCLTREHW (471 aa)) are Extracellular-facing. N-linked (GlcNAc...) asparagine glycosylation occurs at asparagine 152. Positions 199-250 (DTSNNNNNNNNNNNNNNNNNNNNNNNNNNNNNNNENNDNDNGNNNNNNDNEK) are disordered. Residues 202–246 (NNNNNNNNNNNNNNNNNNNNNNNNNNNNNNNENNDNDNGNNNNNN) show a composition bias toward low complexity. Asparagine 386 and asparagine 412 each carry an N-linked (GlcNAc...) asparagine glycan.

The protein belongs to the glycosyltransferase 8 family. Highly divergent.

Its subcellular location is the membrane. Functionally, may have a role in modulating cell adhesion and glycosylation. Essential for development. In Dictyostelium discoideum (Social amoeba), this protein is Glycosyltransferase-like protein gnt15 (gnt15).